A 351-amino-acid chain; its full sequence is Keratocan (351 aa).

A signal peptide spans 1–20; the sequence is MATPNCLILWVLLIADTVWT. The LRRNT domain maps to 34–72; it reads DWDVHDDFYCPRECFCPPSFPTALYCENRGLTEIPPIPS. Disulfide bonds link Cys43-Cys49 and Cys47-Cys59. LRR repeat units lie at residues 73-94, 97-118, 123-143, 144-165, 168-181, 194-214, 215-236, 239-259, 264-283, and 284-305; these read RIWY…PFEN, QLRW…KGAL, KLLF…PLPR, SLEQ…TFSN, NLTL…KLLD, NLMQ…RLPA, NTMQ…YFNV, KVAF…PSRG, SILD…RINA, and NLQH…VICP. The N-linked (GlcNAc...) (keratan sulfate) asparagine glycan is linked to Asn94. Asn168 carries an N-linked (GlcNAc...) (keratan sulfate) asparagine glycan. N-linked (GlcNAc...) asparagine glycosylation is present at Asn223. Asn299 is a glycosylation site (N-linked (GlcNAc...) asparagine). An intrachain disulfide couples Cys304 to Cys342.

It belongs to the small leucine-rich proteoglycan (SLRP) family. SLRP class II subfamily. Binds keratan sulfate chains. As to expression, selectively expressed in cornea of adult where it is detected in keratocytes but not in scleral cells. In embryo, first detected in periocular mesenchymal cells migrating toward developing cornea on 13.5 dpc; expression gradually restricted to corneal stromal cells on 14.5 to 18.5 dpc. Detected in scleral cells of 15.5 dpc but not in 18.5 dpc embryos.

Its subcellular location is the secreted. It is found in the extracellular space. It localises to the extracellular matrix. May be important in developing and maintaining corneal transparency and for the structure of the stromal matrix. This Mus musculus (Mouse) protein is Keratocan (Kera).